The sequence spans 256 residues: Acetyl-coenzyme A carboxylase carboxyl transferase subunit alpha (256 aa).

A CoA carboxyltransferase C-terminal domain is found at 1 to 236 (MTDVSRVLKE…KANLIEQITS (236 aa)).

The protein belongs to the AccA family. In terms of assembly, acetyl-CoA carboxylase is a heterohexamer composed of biotin carboxyl carrier protein (AccB), biotin carboxylase (AccC) and two subunits each of ACCase subunit alpha (AccA) and ACCase subunit beta (AccD).

The protein localises to the cytoplasm. It catalyses the reaction N(6)-carboxybiotinyl-L-lysyl-[protein] + acetyl-CoA = N(6)-biotinyl-L-lysyl-[protein] + malonyl-CoA. It functions in the pathway lipid metabolism; malonyl-CoA biosynthesis; malonyl-CoA from acetyl-CoA: step 1/1. Functionally, component of the acetyl coenzyme A carboxylase (ACC) complex. First, biotin carboxylase catalyzes the carboxylation of biotin on its carrier protein (BCCP) and then the CO(2) group is transferred by the carboxyltransferase to acetyl-CoA to form malonyl-CoA. This Streptococcus pyogenes serotype M2 (strain MGAS10270) protein is Acetyl-coenzyme A carboxylase carboxyl transferase subunit alpha.